Consider the following 530-residue polypeptide: Probable basic-leucine zipper transcription factor L (530 aa).

Low complexity-rich tracts occupy residues 1-17 (MYSP…SPES) and 24-39 (SINN…ANQS). The interval 1-76 (MYSPSSPQSS…QSAALSRSRK (76 aa)) is disordered. Positions 55 to 118 (VKKRQVRLLK…FETKSRLEFL (64 aa)) constitute a bZIP domain. The interval 56-77 (KKRQVRLLKNRQSAALSRSRKK) is basic motif. The segment at 83 to 104 (LESKAQELTHSTQELHVQYNKI) is leucine-zipper. 3 disordered regions span residues 142-177 (NNIK…TTPV), 216-258 (SQNK…SPTP), and 389-481 (HHHH…SQIN). Low complexity-rich tracts occupy residues 149–176 (RSNS…STTP) and 220–247 (NNNN…NTTN). Residues 248-257 (LLDQQQQSPT) show a composition bias toward polar residues. Residues 436–478 (SSSPSSSSTSSPSTSSPSTPKSMGFPSPIFIGSSGSGPSSSGS) are compositionally biased toward low complexity.

The protein belongs to the bZIP family.

The protein resides in the nucleus. Functionally, probable transcriptional regulator. The chain is Probable basic-leucine zipper transcription factor L (bzpL) from Dictyostelium discoideum (Social amoeba).